The following is a 344-amino-acid chain: Small neutral protease regulatory protein (344 aa).

In terms of domain architecture, HTH lysR-type spans 1–60 (MELEVRHLRALCAIADAGSLHRAARRLGVAQPTLSTQLTRIEQALGGPLFTRERTGCRPT). The segment at residues 20-39 (LHRAARRLGVAQPTLSTQLT) is a DNA-binding region (H-T-H motif). The tract at residues 322 to 344 (SCGRAEGSRSRRPRDVAPPRPIG) is disordered. Over residues 327-338 (EGSRSRRPRDVA) the composition is skewed to basic and acidic residues.

It belongs to the LysR transcriptional regulatory family.

Transcriptional activator of the gene (snpA) for the small neutral protease. The sequence is that of Small neutral protease regulatory protein (mprR) from Streptomyces lividans.